Reading from the N-terminus, the 267-residue chain is 4-hydroxy-tetrahydrodipicolinate reductase (267 aa).

NAD(+) contacts are provided by residues 8 to 13 (GAAGRM) and D34. R35 provides a ligand contact to NADP(+). Residues 98-100 (GTT) and 122-125 (AANF) each bind NAD(+). Catalysis depends on H155, which acts as the Proton donor/acceptor. H156 is a binding site for (S)-2,3,4,5-tetrahydrodipicolinate. K159 (proton donor) is an active-site residue. (S)-2,3,4,5-tetrahydrodipicolinate is bound at residue 165–166 (GT).

Belongs to the DapB family.

Its subcellular location is the cytoplasm. The enzyme catalyses (S)-2,3,4,5-tetrahydrodipicolinate + NAD(+) + H2O = (2S,4S)-4-hydroxy-2,3,4,5-tetrahydrodipicolinate + NADH + H(+). It catalyses the reaction (S)-2,3,4,5-tetrahydrodipicolinate + NADP(+) + H2O = (2S,4S)-4-hydroxy-2,3,4,5-tetrahydrodipicolinate + NADPH + H(+). It participates in amino-acid biosynthesis; L-lysine biosynthesis via DAP pathway; (S)-tetrahydrodipicolinate from L-aspartate: step 4/4. Catalyzes the conversion of 4-hydroxy-tetrahydrodipicolinate (HTPA) to tetrahydrodipicolinate. In Pseudomonas putida (strain W619), this protein is 4-hydroxy-tetrahydrodipicolinate reductase.